The chain runs to 642 residues: Threonine--tRNA ligase (642 aa).

One can recognise a TGS domain in the interval 1–61 (MPVITLPDGS…HEDASLSIIT (61 aa)). The catalytic stretch occupies residues 243 to 534 (DHRKIGKQLD…LIEEYAGRFP (292 aa)). Cys334, His385, and His511 together coordinate Zn(2+).

The protein belongs to the class-II aminoacyl-tRNA synthetase family. Homodimer. Zn(2+) is required as a cofactor.

Its subcellular location is the cytoplasm. The enzyme catalyses tRNA(Thr) + L-threonine + ATP = L-threonyl-tRNA(Thr) + AMP + diphosphate + H(+). In terms of biological role, catalyzes the attachment of threonine to tRNA(Thr) in a two-step reaction: L-threonine is first activated by ATP to form Thr-AMP and then transferred to the acceptor end of tRNA(Thr). Also edits incorrectly charged L-seryl-tRNA(Thr). The protein is Threonine--tRNA ligase of Shewanella amazonensis (strain ATCC BAA-1098 / SB2B).